The following is a 133-amino-acid chain: MDTKKKSKEHGLYRIVNAIGYAFGAGAVGGSVYHFVRGAYNSPIGARYVGGTQAASMNAPRLGGTFAVFGGLLSTFDYALVRIRKKEDPWNSIVAGAATGGVLSIRKGVVAASTSAVMFGFFLAVLNPPFGSK.

The next 4 helical transmembrane spans lie at 15 to 35 (IVNA…VYHF), 63 to 83 (GGTF…LVRI), 90 to 105 (WNSI…VLSI), and 115 to 128 (SAVM…VLNP).

Belongs to the Tim17/Tim22/Tim23 family. Component of the TIM17:23 complex at least composed of TIM23, TIM17 and TIM50. The complex interacts with the TIM44 component of the PAM complex. Expressed in cotyledons, roots, flowers and leaves.

The protein resides in the mitochondrion inner membrane. In terms of biological role, essential component of the TIM17:23 complex, a complex that mediates the translocation of transit peptide-containing proteins across the mitochondrial inner membrane. Links the inner and outer membranes. The polypeptide is Mitochondrial import inner membrane translocase subunit TIM17-3 (TIM17-3) (Arabidopsis thaliana (Mouse-ear cress)).